We begin with the raw amino-acid sequence, 356 residues long: Tyrosine recombinase XerS (356 aa).

In terms of domain architecture, Core-binding (CB) spans 16–121 (TMPWYILEYY…ALSSLYKYLT (106 aa)). The 186-residue stretch at 169-354 (EFLQYIDTEY…VNDEQKNALD (186 aa)) folds into the Tyr recombinase domain. Active-site residues include Arg210, Lys234, His306, Arg309, and His332. The active-site O-(3'-phospho-DNA)-tyrosine intermediate is Tyr341.

It belongs to the 'phage' integrase family. XerS subfamily.

The protein resides in the cytoplasm. With respect to regulation, ftsK is required for recombination. In terms of biological role, site-specific tyrosine recombinase, which acts by catalyzing the cutting and rejoining of the recombining DNA molecules. Essential to convert dimers of the bacterial chromosome into monomers to permit their segregation at cell division. The chain is Tyrosine recombinase XerS from Streptococcus sanguinis (strain SK36).